The sequence spans 439 residues: Large ribosomal subunit protein mL44 (439 aa).

Disordered stretches follow at residues 39–73 and 247–282; these read QSTA…SLPS and KAME…YGNP. The span at 247 to 257 shows a compositional bias: basic and acidic residues; the sequence is KAMEEQDQDKT. Acidic residues predominate over residues 258–274; it reads PDEEEAEMVANEQDQDV.

The protein belongs to the ribonuclease III family. Mitochondrion-specific ribosomal protein mL44 subfamily. Component of the mitochondrial large ribosomal subunit (mt-LSU). Mature N.crassa 74S mitochondrial ribosomes consist of a small (37S) and a large (54S) subunit. The 37S small subunit contains a 16S ribosomal RNA (16S mt-rRNA) and 32 different proteins. The 54S large subunit contains a 23S rRNA (23S mt-rRNA) and 42 different proteins. mL44 forms a heterodimer with mL57 and stabilizes rRNA expansion segments 1/2 at a membrane-facing protuberance close to the point of attachment of the ribosome to the translocon in the membrane.

Its subcellular location is the mitochondrion. Functionally, component of the mitochondrial ribosome (mitoribosome), a dedicated translation machinery responsible for the synthesis of mitochondrial genome-encoded proteins, including at least some of the essential transmembrane subunits of the mitochondrial respiratory chain. The mitoribosomes are attached to the mitochondrial inner membrane and translation products are cotranslationally integrated into the membrane. The protein is Large ribosomal subunit protein mL44 (mrpl3) of Neurospora crassa (strain ATCC 24698 / 74-OR23-1A / CBS 708.71 / DSM 1257 / FGSC 987).